A 574-amino-acid polypeptide reads, in one-letter code: Proline--tRNA ligase (574 aa).

Belongs to the class-II aminoacyl-tRNA synthetase family. ProS type 1 subfamily. As to quaternary structure, homodimer.

The protein resides in the cytoplasm. The enzyme catalyses tRNA(Pro) + L-proline + ATP = L-prolyl-tRNA(Pro) + AMP + diphosphate. Its function is as follows. Catalyzes the attachment of proline to tRNA(Pro) in a two-step reaction: proline is first activated by ATP to form Pro-AMP and then transferred to the acceptor end of tRNA(Pro). As ProRS can inadvertently accommodate and process non-cognate amino acids such as alanine and cysteine, to avoid such errors it has two additional distinct editing activities against alanine. One activity is designated as 'pretransfer' editing and involves the tRNA(Pro)-independent hydrolysis of activated Ala-AMP. The other activity is designated 'posttransfer' editing and involves deacylation of mischarged Ala-tRNA(Pro). The misacylated Cys-tRNA(Pro) is not edited by ProRS. The polypeptide is Proline--tRNA ligase (Ralstonia nicotianae (strain ATCC BAA-1114 / GMI1000) (Ralstonia solanacearum)).